Consider the following 148-residue polypeptide: Nucleoside diphosphate kinase (148 aa).

Positions 9, 57, 85, 91, 102, and 112 each coordinate ATP. Threonine 91 carries the phosphothreonine modification. The active-site Pros-phosphohistidine intermediate is the histidine 115. Residue serine 122 is modified to Phosphoserine.

Belongs to the NDK family. Homotetramer. The cofactor is Mg(2+).

It localises to the cytoplasm. The catalysed reaction is a 2'-deoxyribonucleoside 5'-diphosphate + ATP = a 2'-deoxyribonucleoside 5'-triphosphate + ADP. The enzyme catalyses a ribonucleoside 5'-diphosphate + ATP = a ribonucleoside 5'-triphosphate + ADP. In terms of biological role, major role in the synthesis of nucleoside triphosphates other than ATP. The ATP gamma phosphate is transferred to the NDP beta phosphate via a ping-pong mechanism, using a phosphorylated active-site intermediate. This is Nucleoside diphosphate kinase from Bacillus licheniformis (strain ATCC 14580 / DSM 13 / JCM 2505 / CCUG 7422 / NBRC 12200 / NCIMB 9375 / NCTC 10341 / NRRL NRS-1264 / Gibson 46).